Consider the following 491-residue polypeptide: Glycogen synthase 1 (491 aa).

ADP-alpha-D-glucose is bound at residue Lys15.

This sequence belongs to the glycosyltransferase 1 family. Bacterial/plant glycogen synthase subfamily.

It carries out the reaction [(1-&gt;4)-alpha-D-glucosyl](n) + ADP-alpha-D-glucose = [(1-&gt;4)-alpha-D-glucosyl](n+1) + ADP + H(+). Its pathway is glycan biosynthesis; glycogen biosynthesis. Synthesizes alpha-1,4-glucan chains using ADP-glucose. The sequence is that of Glycogen synthase 1 from Synechococcus sp. (strain JA-3-3Ab) (Cyanobacteria bacterium Yellowstone A-Prime).